A 289-amino-acid polypeptide reads, in one-letter code: Vesicular-fusion protein SEC17 (289 aa).

This sequence belongs to the SNAP family.

The protein localises to the membrane. In terms of biological role, required for vesicular transport between the endoplasmic reticulum and the Golgi apparatus. This chain is Vesicular-fusion protein SEC17 (SEC17), found in Coprinopsis cinerea (strain Okayama-7 / 130 / ATCC MYA-4618 / FGSC 9003) (Inky cap fungus).